The primary structure comprises 83 residues: Cytochrome b559 subunit alpha (83 aa).

The helical transmembrane segment at 21-35 (VIHSITIPSLFIAGW) threads the bilayer. His23 contributes to the heme binding site.

This sequence belongs to the PsbE/PsbF family. As to quaternary structure, heterodimer of an alpha subunit and a beta subunit. PSII is composed of 1 copy each of membrane proteins PsbA, PsbB, PsbC, PsbD, PsbE, PsbF, PsbH, PsbI, PsbJ, PsbK, PsbL, PsbM, PsbT, PsbX, PsbY, PsbZ, Psb30/Ycf12, at least 3 peripheral proteins of the oxygen-evolving complex and a large number of cofactors. It forms dimeric complexes. Requires heme b as cofactor.

The protein resides in the plastid. It is found in the chloroplast thylakoid membrane. This b-type cytochrome is tightly associated with the reaction center of photosystem II (PSII). PSII is a light-driven water:plastoquinone oxidoreductase that uses light energy to abstract electrons from H(2)O, generating O(2) and a proton gradient subsequently used for ATP formation. It consists of a core antenna complex that captures photons, and an electron transfer chain that converts photonic excitation into a charge separation. In Pinus koraiensis (Korean pine), this protein is Cytochrome b559 subunit alpha.